The primary structure comprises 378 residues: MKILIDNNIIFSYSLFKKIGKVNLINSIDINAKNISGFDALIIKSSTNVNENLLKNSNIKFIGSATSGKDHVDVDWLKKNKINFDFAPGCNSVAVAEYVFSSMLYFAYRDKFSLLKKTVGIVGFGNIGKCLNKKLSAIGVKTILCDPILEEKNNIKLKSLNEIVQNSDIITLHVPLTYSGKYPTWHLINKKILLDLKDNCILINTSRGSVIDNNSLLNILKEGKPIRVVLDVWENEPLICSKLLSLIDIGTPHIAGHSLEGKIKGTISIFNSLCNFVGKKNKKYFISSFIDPYEIEYISMKGRIDQSKIYLLSLLSNNILYDDHELRKNFNKKNCFVNLRNSYRKRREWSSLFIKSNNILFSNLLNKIGFNSKFFKEK.

Residues serine 45 and threonine 66 each contribute to the substrate site. Residue aspartate 146 coordinates NAD(+). Residue arginine 207 is part of the active site. Position 231 (aspartate 231) interacts with NAD(+). Glutamate 236 is a catalytic residue. Catalysis depends on histidine 253, which acts as the Proton donor. Glycine 256 serves as a coordination point for NAD(+).

Belongs to the D-isomer specific 2-hydroxyacid dehydrogenase family. PdxB subfamily. As to quaternary structure, homodimer.

The protein resides in the cytoplasm. It carries out the reaction 4-phospho-D-erythronate + NAD(+) = (R)-3-hydroxy-2-oxo-4-phosphooxybutanoate + NADH + H(+). The protein operates within cofactor biosynthesis; pyridoxine 5'-phosphate biosynthesis; pyridoxine 5'-phosphate from D-erythrose 4-phosphate: step 2/5. In terms of biological role, catalyzes the oxidation of erythronate-4-phosphate to 3-hydroxy-2-oxo-4-phosphonooxybutanoate. The protein is Erythronate-4-phosphate dehydrogenase of Wigglesworthia glossinidia brevipalpis.